A 469-amino-acid polypeptide reads, in one-letter code: 3-isopropylmalate dehydratase large subunit (469 aa).

Residues Cys350, Cys410, and Cys413 each contribute to the [4Fe-4S] cluster site.

This sequence belongs to the aconitase/IPM isomerase family. LeuC type 1 subfamily. Heterodimer of LeuC and LeuD. [4Fe-4S] cluster serves as cofactor.

The catalysed reaction is (2R,3S)-3-isopropylmalate = (2S)-2-isopropylmalate. The protein operates within amino-acid biosynthesis; L-leucine biosynthesis; L-leucine from 3-methyl-2-oxobutanoate: step 2/4. Functionally, catalyzes the isomerization between 2-isopropylmalate and 3-isopropylmalate, via the formation of 2-isopropylmaleate. The chain is 3-isopropylmalate dehydratase large subunit from Rhizobium meliloti (strain 1021) (Ensifer meliloti).